The chain runs to 326 residues: Target of rapamycin complex subunit LST8 (326 aa).

Met-1 is modified (N-acetylmethionine). WD repeat units follow at residues 1–37, 40–80, 83–122, 126–165, and 168–207; these read MNTS…CTRT, HQDS…PIIS, GVNK…LQCQ, QVNA…NEQL, and EPEV…GDEV. Thr-51 carries the phosphothreonine modification. A Glycyl lysine isopeptide (Lys-Gly) (interchain with G-Cter in SUMO3) cross-link involves residue Lys-86. Glycyl lysine isopeptide (Lys-Gly) (interchain with G-Cter in SUMO3) cross-links involve residues Lys-215, Lys-245, and Lys-261. A WD 6 repeat occupies 218 to 257; it reads AHTRYALQCRFSPDSTLLATCSADQTCKIWRTSNFSLMTE. Residues 268–309 form a WD 7 repeat; that stretch reads SSRGWMWGCAFSGDSQYIVTASSDNLARLWCVETGEIKREYG. Lys-305 participates in a covalent cross-link: Glycyl lysine isopeptide (Lys-Gly) (interchain with G-Cter in SUMO3); alternate. Residues Lys-305 and Lys-313 each participate in a glycyl lysine isopeptide (Lys-Gly) (interchain with G-Cter in ubiquitin); alternate cross-link. A Glycyl lysine isopeptide (Lys-Gly) (interchain with G-Cter in SUMO1); alternate cross-link involves residue Lys-313.

It belongs to the WD repeat LST8 family. Part of the mechanistic target of rapamycin complex 1 (mTORC1) which contains MTOR, MLST8 and RPTOR. mTORC1 associates with AKT1S1/PRAS40, which inhibits its activity. mTORC1 binds to and is inhibited by FKBP12-rapamycin. Within mTORC1, interacts directly with MTOR and RPTOR. Component of the mechanistic target of rapamycin complex 2 (mTORC2), consisting in two heterotretramers composed of MTOR, MLST8, RICTOR and MAPKAP1/SIN1. Contrary to mTORC1, mTORC2 does not bind to and is not sensitive to FKBP12-rapamycin. mTORC1 and mTORC2 associate with DEPTOR, which regulates their activity. Interacts with RHEB. Interacts with MEAK7. Interacts with SIK3. Interacts with SLC38A7; this interaction promotes the recruitment of mTORC1 to the lysosome and its subsequent activation. Post-translationally, phosphorylation at Thr-51 by CDK1 promotes ubiquitination by the SCF(FBXW7) complex, followed by degradation. In terms of processing, ubiquitination by the SCF(FBXW7) and SCF(FBXW11) complexes following phosphorylation at Thr-51 by CDK1, leads to its degradation by the proteasome. Ubiquitination at Lys-305 and Lys-313 by TRAF2 via 'Lys-63'-linked polyubiquitin chains inhibits formation of the mTORC2 complex, while promoting formation of the mTORC1 complex: ubiquitination disrupts the interaction between MLST8 and MAPKAP1/SIN1 to favor mTORC1 assembly. Deubiquitination at Lys-305 and Lys-313 by OTUD7B promotes MLST8 interaction with MAPKAP1/SIN1, facilitating mTORC2 assembly. Sumoylation with SUMO1, SUMO2 and SUMO3 promotes assembly of both mTORC1 and mTORC2 complexes.

The protein localises to the lysosome membrane. Its subcellular location is the cytoplasm. In terms of biological role, subunit of both mTORC1 and mTORC2, which regulates cell growth and survival in response to nutrient and hormonal signals. mTORC1 is activated in response to growth factors or amino acids. In response to nutrients, mTORC1 is recruited to the lysosome membrane and promotes protein, lipid and nucleotide synthesis by phosphorylating several substrates, such as ribosomal protein S6 kinase (RPS6KB1 and RPS6KB2) and EIF4EBP1 (4E-BP1). In the same time, it inhibits catabolic pathways by phosphorylating the autophagy initiation components ULK1 and ATG13, as well as transcription factor TFEB, a master regulators of lysosomal biogenesis and autophagy. The mTORC1 complex is inhibited in response to starvation and amino acid depletion. Within mTORC1, MLST8 interacts directly with MTOR and enhances its kinase activity. In nutrient-poor conditions, stabilizes the MTOR-RPTOR interaction and favors RPTOR-mediated inhibition of MTOR activity. As part of the mTORC2 complex, transduces signals from growth factors to pathways involved in proliferation, cytoskeletal organization, lipogenesis and anabolic output. mTORC2 is also activated by growth factors, but seems to be nutrient-insensitive. In response to growth factors, mTORC2 phosphorylates and activates AGC protein kinase family members, including AKT (AKT1, AKT2 and AKT3), PKC (PRKCA, PRKCB and PRKCE) and SGK1. mTORC2 functions upstream of Rho GTPases to regulate the actin cytoskeleton, probably by activating one or more Rho-type guanine nucleotide exchange factors. mTORC2 promotes the serum-induced formation of stress-fibers or F-actin. mTORC2 plays a critical role in AKT1 activation by mediating phosphorylation of different sites depending on the context, such as 'Thr-450', 'Ser-473', 'Ser-477' or 'Thr-479', facilitating the phosphorylation of the activation loop of AKT1 on 'Thr-308' by PDPK1/PDK1 which is a prerequisite for full activation. mTORC2 regulates the phosphorylation of SGK1 at 'Ser-422'. mTORC2 also modulates the phosphorylation of PRKCA on 'Ser-657'. Within mTORC2, MLST8 acts as a bridge between MAPKAP1/SIN1 and MTOR. The polypeptide is Target of rapamycin complex subunit LST8 (Bos taurus (Bovine)).